Consider the following 530-residue polypeptide: Phosphoenolpyruvate carboxykinase (ATP) (530 aa).

Residues Arg-60, Tyr-195, and Lys-201 each contribute to the substrate site. ATP is bound by residues Lys-201, His-221, and 237-245; that span reads GLSGTGKTT. Residues Lys-201 and His-221 each coordinate Mn(2+). Asp-258 provides a ligand contact to Mn(2+). Residues Glu-286, Arg-324, 443 to 444, and Ser-449 contribute to the ATP site; that span reads RI. Substrate is bound at residue Arg-324.

The protein belongs to the phosphoenolpyruvate carboxykinase (ATP) family. The cofactor is Mn(2+).

The protein resides in the cytoplasm. The catalysed reaction is oxaloacetate + ATP = phosphoenolpyruvate + ADP + CO2. It functions in the pathway carbohydrate biosynthesis; gluconeogenesis. Functionally, involved in the gluconeogenesis. Catalyzes the conversion of oxaloacetate (OAA) to phosphoenolpyruvate (PEP) through direct phosphoryl transfer between the nucleoside triphosphate and OAA. This Pelobacter propionicus (strain DSM 2379 / NBRC 103807 / OttBd1) protein is Phosphoenolpyruvate carboxykinase (ATP).